The following is a 200-amino-acid chain: Peroxiredoxin (200 aa).

In terms of domain architecture, Thioredoxin spans 6 to 166 (ARIGHLAPGF…ILRLVQAFQF (161 aa)). C52 functions as the Cysteine sulfenic acid (-SOH) intermediate in the catalytic mechanism.

Belongs to the peroxiredoxin family. AhpC/Prx1 subfamily. As to quaternary structure, homodimer; disulfide-linked, upon oxidation.

The catalysed reaction is a hydroperoxide + [thioredoxin]-dithiol = an alcohol + [thioredoxin]-disulfide + H2O. In terms of biological role, thiol-specific peroxidase that catalyzes the reduction of hydrogen peroxide and organic hydroperoxides to water and alcohols, respectively. Plays a role in cell protection against oxidative stress by detoxifying peroxides and as sensor of hydrogen peroxide-mediated signaling events. The chain is Peroxiredoxin from Oncorhynchus mykiss (Rainbow trout).